Reading from the N-terminus, the 69-residue chain is Amphipathic peptide StCT2 (69 aa).

Residues 1–23 (MKTQFAVLIISMILMQMLVQTEA) form the signal peptide. At isoleucine 37 the chain carries Isoleucine amide. Positions 41-69 (SLRNQDQFDNMFDSDLSDADLKLLDDLFD) are excised as a propeptide.

This sequence belongs to the non-disulfide-bridged peptide (NDBP) superfamily. Short antimicrobial peptide (group 4) family. Expressed by the venom gland.

The protein localises to the secreted. It is found in the target cell membrane. Antimicrobial peptide that is rapidly bactericidal against Gram-positive bacteria. This is Amphipathic peptide StCT2 from Scorpiops tibetanus (Scorpion).